The chain runs to 986 residues: Bifunctional glutamine synthetase adenylyltransferase/adenylyl-removing enzyme (986 aa).

Residues 1–470 (MAAVAKRTVT…ERHYAALFET (470 aa)) form an adenylyl removase region. Residues 476-986 (AGIGNLVFTG…FDLLLRAGRP (511 aa)) form an adenylyl transferase region.

Belongs to the GlnE family. It depends on Mg(2+) as a cofactor.

It catalyses the reaction [glutamine synthetase]-O(4)-(5'-adenylyl)-L-tyrosine + phosphate = [glutamine synthetase]-L-tyrosine + ADP. The enzyme catalyses [glutamine synthetase]-L-tyrosine + ATP = [glutamine synthetase]-O(4)-(5'-adenylyl)-L-tyrosine + diphosphate. Functionally, involved in the regulation of glutamine synthetase GlnA, a key enzyme in the process to assimilate ammonia. When cellular nitrogen levels are high, the C-terminal adenylyl transferase (AT) inactivates GlnA by covalent transfer of an adenylyl group from ATP to specific tyrosine residue of GlnA, thus reducing its activity. Conversely, when nitrogen levels are low, the N-terminal adenylyl removase (AR) activates GlnA by removing the adenylyl group by phosphorolysis, increasing its activity. The regulatory region of GlnE binds the signal transduction protein PII (GlnB) which indicates the nitrogen status of the cell. The chain is Bifunctional glutamine synthetase adenylyltransferase/adenylyl-removing enzyme from Mesorhizobium japonicum (strain LMG 29417 / CECT 9101 / MAFF 303099) (Mesorhizobium loti (strain MAFF 303099)).